Reading from the N-terminus, the 846-residue chain is Matrin-3 (846 aa).

Serine 2 is subject to N-acetylserine. Lysine 3 carries the post-translational modification N6-acetyllysine; alternate. Residue lysine 3 forms a Glycyl lysine isopeptide (Lys-Gly) (interchain with G-Cter in SUMO2); alternate linkage. Serine 4, serine 9, serine 14, serine 22, serine 41, serine 118, and serine 126 each carry phosphoserine. Residues lysine 132 and lysine 146 each participate in a glycyl lysine isopeptide (Lys-Gly) (interchain with G-Cter in SUMO2) cross-link. Disordered stretches follow at residues 147–174 (RRRT…YRVP) and 187–213 (DSFD…ESGY). Phosphothreonine is present on threonine 150. Serine 157 is subject to Phosphoserine. Tyrosine 158 bears the Phosphotyrosine mark. Residues 160–174 (RDGRSATREPPYRVP) are compositionally biased toward basic and acidic residues. Residues serine 164, serine 188, and serine 195 each carry the phosphoserine modification. Basic and acidic residues predominate over residues 201–213 (DYDHGSRSQESGY). The residue at position 202 (tyrosine 202) is a Phosphotyrosine. Phosphoserine occurs at positions 206, 208, and 211. The residue at position 219 (tyrosine 219) is a Phosphotyrosine. Phosphoserine is present on serine 234. Lysine 245 is covalently cross-linked (Glycyl lysine isopeptide (Lys-Gly) (interchain with G-Cter in SUMO2)). Serine 264 bears the Phosphoserine mark. Lysine 269 participates in a covalent cross-link: Glycyl lysine isopeptide (Lys-Gly) (interchain with G-Cter in SUMO2). Serine 275 carries the phosphoserine modification. Residues 342 to 394 (PFMLQQSTNPAPGILGPPPPSFHLGGPAVGPRGNLGAGNGNLQGPRHMQKGRV) are disordered. The region spanning 398 to 473 (RVVHIMDFQR…KPVRVHLSQK (76 aa)) is the RRM 1 domain. Residues lysine 478, lysine 487, and lysine 491 each participate in a glycyl lysine isopeptide (Lys-Gly) (interchain with G-Cter in SUMO2) cross-link. In terms of domain architecture, RRM 2 spans 496 to 571 (RVIHLSNLPH…RCVKVDLSEK (76 aa)). 2 positions are modified to phosphoserine: serine 509 and serine 511. Residue lysine 515 forms a Glycyl lysine isopeptide (Lys-Gly) (interchain with G-Cter in SUMO2) linkage. Lysine 522 is modified (N6-acetyllysine; alternate). Lysine 522 is covalently cross-linked (Glycyl lysine isopeptide (Lys-Gly) (interchain with G-Cter in SUMO2); alternate). Serine 533 is subject to Phosphoserine. Residues lysine 554 and lysine 555 each participate in a glycyl lysine isopeptide (Lys-Gly) (interchain with G-Cter in SUMO2) cross-link. Lysine 571 is subject to N6-acetyllysine. Positions 588 to 779 (KKDKSRKRSY…EDYTIPDEYR (192 aa)) are disordered. Phosphoserine is present on residues serine 596, serine 598, serine 604, and serine 606. The segment covering 600-642 (DGKESPSDKKSKTDAQKTESPAEGKEQEEKSGEDGEKDTKDDQ) has biased composition (basic and acidic residues). Glycyl lysine isopeptide (Lys-Gly) (interchain with G-Cter in SUMO2) cross-links involve residues lysine 616 and lysine 629. Residues 652–664 (ESEDELLVDEEEA) show a composition bias toward acidic residues. A phosphoserine mark is found at serine 653, serine 670, serine 672, and serine 673. A compositionally biased stretch (low complexity) spans 665 to 675 (AALLESGSSVG). Threonine 678 carries the post-translational modification Phosphothreonine. Serine 688 bears the Phosphoserine mark. Residues 688–703 (SDGKKEPSDKAVKKDP) are compositionally biased toward basic and acidic residues. The Nuclear localization signal motif lies at 709 to 717 (SKKKLKKVD). Glycyl lysine isopeptide (Lys-Gly) (interchain with G-Cter in SUMO2) cross-links involve residues lysine 718 and lysine 735. Residue threonine 740 is modified to Phosphothreonine. 2 positions are modified to phosphoserine: serine 746 and serine 758. Residues 766-779 (DENKEDYTIPDEYR) show a composition bias toward basic and acidic residues. Lysine 769 participates in a covalent cross-link: Glycyl lysine isopeptide (Lys-Gly) (interchain with G-Cter in SUMO2). A Matrin-type zinc finger spans residues 800–831 (FYCKLCSLFYTNEEVAKNTHCSSLPHYQKLKK). Position 835 is an N6-acetyllysine; alternate (lysine 835). Residue lysine 835 forms a Glycyl lysine isopeptide (Lys-Gly) (interchain with G-Cter in SUMO2); alternate linkage.

As to quaternary structure, part of a complex consisting of SFPQ, NONO and MATR3. Interacts with AGO1 and AGO2. Part of a complex composed at least of ASH2L, EMSY, HCFC1, HSPA8, CCAR2, MATR3, MKI67, RBBP5, TUBB2A, WDR5 and ZNF335; this complex may have a histone H3-specific methyltransferase activity. Interacts with TARDBP. Part of the HDP-RNP complex composed of at least HEXIM1, PRKDC, XRCC5, XRCC6, paraspeckle proteins (SFPQ, NONO, PSPC1, RBM14, and MATR3) and NEAT1 RNA. Interacts with FUS. Interacts with IGF2BP1. Interacts with IGF2BP2 and IGF2BP3. Interacts with RBPMS.

The protein resides in the nucleus matrix. In terms of biological role, may play a role in transcription or may interact with other nuclear matrix proteins to form the internal fibrogranular network. In association with the SFPQ-NONO heteromer may play a role in nuclear retention of defective RNAs. Plays a role in the regulation of DNA virus-mediated innate immune response by assembling into the HDP-RNP complex, a complex that serves as a platform for IRF3 phosphorylation and subsequent innate immune response activation through the cGAS-STING pathway. Binds to N6-methyladenosine (m6A)-containing mRNAs and contributes to MYC stability by binding to m6A-containing MYC mRNAs. May bind to specific miRNA hairpins. The chain is Matrin-3 (Matr3) from Mus musculus (Mouse).